The primary structure comprises 301 residues: Recombination-associated protein RdgC (301 aa).

Belongs to the RdgC family.

Its subcellular location is the cytoplasm. It localises to the nucleoid. Its function is as follows. May be involved in recombination. This Pseudoalteromonas atlantica (strain T6c / ATCC BAA-1087) protein is Recombination-associated protein RdgC.